The sequence spans 310 residues: D-erythrulose 1-phosphate 3-epimerase (310 aa).

It catalyses the reaction D-erythrulose 1-phosphate = L-erythrulose 1-phosphate. It participates in carbohydrate metabolism; erythritol degradation. Functionally, catalyzes the racemization of D-erythrulose 1-phosphate to L-erythrulose 1-phosphate. The sequence is that of D-erythrulose 1-phosphate 3-epimerase from Brucella abortus (strain 2308).